A 250-amino-acid polypeptide reads, in one-letter code: UPF0494 membrane protein PB2B2.07c (250 aa).

3 consecutive transmembrane segments (helical) span residues 98–118 (WPLLIIWCILIVFAIDKNFEV), 144–164 (IAIYICLFILLLLGLICMFPL), and 179–199 (MIIAVLGAALGMIIAALGATI).

The protein belongs to the UPF0494 family.

Its subcellular location is the cytoplasm. It localises to the endoplasmic reticulum. The protein resides in the golgi apparatus. It is found in the membrane. In Schizosaccharomyces pombe (strain 972 / ATCC 24843) (Fission yeast), this protein is UPF0494 membrane protein PB2B2.07c.